A 246-amino-acid polypeptide reads, in one-letter code: uncharacterized protein (246 aa).

6 helical membrane-spanning segments follow: residues 7-27, 50-70, 99-119, 135-155, 163-183, and 219-239; these read KVTLVSLILMAVFQFFMALII, LNILLQALTIVIAATIVSMEF, VSFYLYLAYYILALLFGLLFF, LALIGSNWLEAVMMGLFGLLC, AVAVVVSFVVLYGASTLVQLM, and FSIGILIIHAIFFIVVGWWCF.

It localises to the cell membrane. This is an uncharacterized protein from Bacillus subtilis (strain 168).